Consider the following 149-residue polypeptide: MPVDQEKLAKLHKLSAANKVGGTRRKINKKGNLYNNNDKDNTKLQAELHKLHPMTIENVAEANFFKKNGKVLHFNSAVVQIAPQCNLTMIHGQPKENTLNGLYPSVASQLGSQELEYLTGLAHNLENEQTVLDQLSDRCSETKQQVMNS.

One can recognise an NAC-A/B domain in the interval 38–103; that stretch reads DKDNTKLQAE…PKENTLNGLY (66 aa).

The protein belongs to the NAC-beta family. In terms of assembly, part of the nascent polypeptide-associated complex (NAC), consisting of EGD2 and either EGD1 or BTT1. NAC associates with ribosomes via EGD1 or BTT1.

The protein resides in the cytoplasm. Its subcellular location is the nucleus. Functionally, acts as a component of the nascent polypeptide-associated complex (NAC), which promotes mitochondrial protein import by enhancing productive ribosome interactions with the outer mitochondrial membrane. Also blocks the inappropriate interaction of ribosomes translating non-secretory nascent polypeptides with translocation sites in the membrane of the endoplasmic reticulum. BTT1 may act as a transcription factor that exert a negative effect on the expression of several genes that are transcribed by RNA polymerase II. The polypeptide is Nascent polypeptide-associated complex subunit beta-2 (BTT1) (Saccharomyces cerevisiae (strain YJM789) (Baker's yeast)).